Consider the following 120-residue polypeptide: Large ribosomal subunit protein eL8 (120 aa).

The protein belongs to the eukaryotic ribosomal protein eL8 family. As to quaternary structure, part of the 50S ribosomal subunit. Probably part of the RNase P complex.

It is found in the cytoplasm. Multifunctional RNA-binding protein that recognizes the K-turn motif in ribosomal RNA, the RNA component of RNase P, box H/ACA, box C/D and box C'/D' sRNAs. The chain is Large ribosomal subunit protein eL8 from Haloquadratum walsbyi (strain DSM 16790 / HBSQ001).